The primary structure comprises 224 residues: Putative homeobox protein R749 (224 aa).

The tract at residues 139–162 (KTKTIKKSTSEKKTSPKKKTTSQQ) is disordered. The segment at residues 161–220 (QQIKRVRLSDEERNILESQYSKNNFPSPEIRDELAKKIGKTPRQVQIWFQNKRCKDRKNL) is a DNA-binding region (homeobox).

The protein resides in the host nucleus. The sequence is that of Putative homeobox protein R749 from Acanthamoeba polyphaga mimivirus (APMV).